We begin with the raw amino-acid sequence, 34 residues long: Photosystem II reaction center protein M (34 aa).

Residues 5–25 (ILAFIATALFVLIPTAFLIIL) traverse the membrane as a helical segment.

It belongs to the PsbM family. PSII is composed of 1 copy each of membrane proteins PsbA, PsbB, PsbC, PsbD, PsbE, PsbF, PsbH, PsbI, PsbJ, PsbK, PsbL, PsbM, PsbT, PsbX, PsbY, PsbZ, Psb30/Ycf12, at least 3 peripheral proteins of the oxygen-evolving complex and a large number of cofactors. It forms dimeric complexes.

Its subcellular location is the plastid. It is found in the chloroplast thylakoid membrane. Its function is as follows. One of the components of the core complex of photosystem II (PSII). PSII is a light-driven water:plastoquinone oxidoreductase that uses light energy to abstract electrons from H(2)O, generating O(2) and a proton gradient subsequently used for ATP formation. It consists of a core antenna complex that captures photons, and an electron transfer chain that converts photonic excitation into a charge separation. This subunit is found at the monomer-monomer interface. This chain is Photosystem II reaction center protein M, found in Zygnema circumcarinatum (Green alga).